Consider the following 342-residue polypeptide: Phosphate acyltransferase (342 aa).

This sequence belongs to the PlsX family. In terms of assembly, homodimer. Probably interacts with PlsY.

The protein resides in the cytoplasm. It carries out the reaction a fatty acyl-[ACP] + phosphate = an acyl phosphate + holo-[ACP]. It functions in the pathway lipid metabolism; phospholipid metabolism. Its function is as follows. Catalyzes the reversible formation of acyl-phosphate (acyl-PO(4)) from acyl-[acyl-carrier-protein] (acyl-ACP). This enzyme utilizes acyl-ACP as fatty acyl donor, but not acyl-CoA. The polypeptide is Phosphate acyltransferase (Shewanella sp. (strain MR-4)).